The chain runs to 160 residues: Surface-adhesin protein E (160 aa).

The N-terminal stretch at 1 to 15 (MKKIILTLSLGLLTA) is a signal peptide. Cysteine 16 carries the N-palmitoyl cysteine lipid modification. Cysteine 16 carries S-diacylglycerol cysteine lipidation. An interaction with laminin and plasminogen region spans residues 41–68 (IRLVKNVNYYIDSESIWVDNQEPQIVHF). The tract at residues 84-108 (PKRYARSVRQYKILNCANYHLTQVR) is interaction with vitronectin and epithelial cells.

In terms of assembly, homodimer. Interacts with host vitronectin, laminin and plasminogen. Can interact with both immobilized and soluble vitronectin.

The protein resides in the cell outer membrane. Its subcellular location is the cell surface. In terms of biological role, acts as a multifunctional adhesin involved in direct interactions with host epithelial cells and host proteins, including vitronectin, laminin and plasminogen. In addition, interaction with serum vitronectin plays an important role in bacterial serum resistance, and conversion of plasminogen to plasmin at the cell surface aids in immune evasion and contributes to bacterial virulence. Induces a pro-inflammatory epithelial cell response, leading to interleukin-8 (IL-8) secretion and up-regulation of ICAM1. This is Surface-adhesin protein E (pe) from Haemophilus influenzae (strain NTHi 3655).